The primary structure comprises 212 residues: Probable octanoyltransferase (212 aa).

Residues Gly-28–Glu-199 enclose the BPL/LPL catalytic domain. Residues Arg-66–His-73, Ser-130–Gly-132, and Gly-143–Ala-145 each bind substrate. The Acyl-thioester intermediate role is filled by Cys-161.

It belongs to the LipB family.

It localises to the cytoplasm. The catalysed reaction is octanoyl-[ACP] + L-lysyl-[protein] = N(6)-octanoyl-L-lysyl-[protein] + holo-[ACP] + H(+). Its pathway is protein modification; protein lipoylation via endogenous pathway; protein N(6)-(lipoyl)lysine from octanoyl-[acyl-carrier-protein]: step 1/2. Its function is as follows. Catalyzes the transfer of endogenously produced octanoic acid from octanoyl-acyl-carrier-protein onto the lipoyl domains of lipoate-dependent enzymes. Lipoyl-ACP can also act as a substrate although octanoyl-ACP is likely to be the physiological substrate. This Pyrobaculum arsenaticum (strain DSM 13514 / JCM 11321 / PZ6) protein is Probable octanoyltransferase.